Reading from the N-terminus, the 77-residue chain is Putative Fis-like DNA-binding protein (77 aa).

Residues 53 to 72 constitute a DNA-binding region (H-T-H motif); the sequence is QSLAADYLGINRNTLRKKLQ.

This sequence belongs to the transcriptional regulatory Fis family.

The polypeptide is Putative Fis-like DNA-binding protein (Ralstonia nicotianae (strain ATCC BAA-1114 / GMI1000) (Ralstonia solanacearum)).